The following is a 144-amino-acid chain: Universal stress protein F (144 aa).

The protein belongs to the universal stress protein A family. In terms of assembly, homodimer.

The sequence is that of Universal stress protein F (uspF) from Escherichia coli O157:H7.